The sequence spans 606 residues: Homeobox protein B-H1 (606 aa).

Residues 1–14 (MKDSMSILTQTPSE) are compositionally biased toward polar residues. Disordered regions lie at residues 1-65 (MKDS…PAVA), 104-188 (YKQQ…HPHA), 261-340 (APAG…AFTD), and 508-606 (AAAN…QIQV). Over residues 21–40 (QLHHHLSHHHHPALHHHPVL) the composition is skewed to basic residues. Residues 41 to 65 (QHHYSLQQQHQQQQQQQPPAPPAVA) show a composition bias toward low complexity. The segment covering 108-118 (QQHHHHHHQSH) has biased composition (basic residues). Over residues 119-138 (HNNNNHSGGSSGGTSPTHHN) the composition is skewed to low complexity. Residues 166–188 (HHLHPQSHPHPHPHPHSHPHPHA) are compositionally biased toward basic residues. A compositionally biased stretch (acidic residues) spans 266 to 284 (ELDDSSDYHEENEDCDSDE). The span at 286-295 (GSAGGGGGGS) shows a compositional bias: gly residues. A compositionally biased stretch (basic and acidic residues) spans 297-314 (HMDDHSVCSNGGKDDDGN). Positions 315 to 325 (SIKSGSTSDMS) are enriched in polar residues. Residues 331 to 390 (QRKARTAFTDHQLQTLEKSFERQKYLSVQERQELAHKLDLSDCQVKTWYQNRRTKWMRQT) constitute a DNA-binding region (homeobox). Pro residues predominate over residues 513–522 (GGPPPPPPPS). The segment covering 523–534 (SAAAATGGSPSP) has biased composition (low complexity). The span at 561-576 (ASPPLPLPLARPPSTP) shows a compositional bias: pro residues.

This sequence belongs to the Antp homeobox family. As to expression, abundant in the eye-antenna imaginal disk.

It is found in the nucleus. Functionally required in R1 and R6 receptor cells and primary pigment cells for normal eye development. The polypeptide is Homeobox protein B-H1 (B-H1) (Drosophila ananassae (Fruit fly)).